Here is a 41-residue protein sequence, read N- to C-terminus: Large ribosomal subunit protein bL36 (41 aa).

Belongs to the bacterial ribosomal protein bL36 family.

The polypeptide is Large ribosomal subunit protein bL36 (Rhodopseudomonas palustris (strain BisB5)).